The sequence spans 188 residues: Putative nucleotidase OB0422 (188 aa).

This sequence belongs to the 5'(3')-deoxyribonucleotidase family.

This chain is Putative nucleotidase OB0422, found in Oceanobacillus iheyensis (strain DSM 14371 / CIP 107618 / JCM 11309 / KCTC 3954 / HTE831).